We begin with the raw amino-acid sequence, 320 residues long: ATP-dependent 6-phosphofructokinase (320 aa).

Residue Gly-12 coordinates ATP. 22 to 26 provides a ligand contact to ADP; the sequence is RGVVR. ATP contacts are provided by residues 73–74 and 103–106; these read RF and GDGS. Position 104 (Asp-104) interacts with Mg(2+). Residue 126 to 128 participates in substrate binding; it reads TID. Asp-128 (proton acceptor) is an active-site residue. Arg-155 is an ADP binding site. Substrate-binding positions include Arg-163 and 170 to 172; that span reads MGR. Residues 186 to 188, Lys-212, and 214 to 216 each bind ADP; these read GCE and KKH. Substrate is bound by residues Glu-223, Arg-244, and 250–253; that span reads HIQR.

The protein belongs to the phosphofructokinase type A (PFKA) family. ATP-dependent PFK group I subfamily. Prokaryotic clade 'B1' sub-subfamily. In terms of assembly, homotetramer. Requires Mg(2+) as cofactor.

The protein resides in the cytoplasm. The enzyme catalyses beta-D-fructose 6-phosphate + ATP = beta-D-fructose 1,6-bisphosphate + ADP + H(+). It functions in the pathway carbohydrate degradation; glycolysis; D-glyceraldehyde 3-phosphate and glycerone phosphate from D-glucose: step 3/4. Its activity is regulated as follows. Allosterically activated by ADP and other diphosphonucleosides, and allosterically inhibited by phosphoenolpyruvate. Catalyzes the phosphorylation of D-fructose 6-phosphate to fructose 1,6-bisphosphate by ATP, the first committing step of glycolysis. The chain is ATP-dependent 6-phosphofructokinase from Photobacterium profundum (strain SS9).